The primary structure comprises 180 residues: uncharacterized protein (180 aa).

One can recognise an N-acetyltransferase domain in the interval 31–180; the sequence is LLVRTAEWLR…HLFEKEITAE (150 aa).

Belongs to the acetyltransferase family.

This is an uncharacterized protein from Bacillus subtilis (strain 168).